A 107-amino-acid chain; its full sequence is Keratin, type I cytoskeletal 20 (107 aa).

The segment at 1–7 is head; sequence GNLWVGN. Residues 8–43 form a coil 1A region; sequence EKMTMKNLNDRLASYLEKVRSLEQSNSKFELQIKQW. An IF rod domain is found at 8–107; it reads EKMTMKNLND…ETERGIRLAV (100 aa). The segment at 44-61 is linker 1; that stretch reads YESNTPGISRDHSAYLQQ. The tract at residues 62 to 107 is coil 1B; the sequence is IQDLRNQIRDAQLQNARCVLQIDNAKLAAEDFRLKYETERGIRLAV.

It belongs to the intermediate filament family. As to quaternary structure, heterotetramer of two type I and two type II keratins. Associates with KRT8.

Plays a significant role in maintaining keratin filament organization in intestinal epithelia. When phosphorylated, plays a role in the secretion of mucin in the small intestine. The chain is Keratin, type I cytoskeletal 20 from Sus scrofa (Pig).